The sequence spans 170 residues: Ankyrin repeat-containing protein C105.02c (170 aa).

2 ANK repeats span residues 46–76 and 81–116; these read LGNDCVHVCTKYGSLECLDWLLDISGVNLNN and TGDTPLHFAVMFIKKDQETALRMVEMLMEVGADPLL. The disordered stretch occupies residues 150-170; it reads SADVVADDDDEEEGSGESDEE. Over residues 154–170 the composition is skewed to acidic residues; that stretch reads VADDDDEEEGSGESDEE.

It localises to the cytoplasm. Its subcellular location is the nucleus. This chain is Ankyrin repeat-containing protein C105.02c, found in Schizosaccharomyces pombe (strain 972 / ATCC 24843) (Fission yeast).